Consider the following 523-residue polypeptide: Metalloprotease TIKI2 (523 aa).

The N-terminal stretch at 1 to 26 (MGKTMWARAVFLCFSVGTLLWQEVLT) is a signal peptide. Over 27–499 (RRIPVDTGQC…HSQSNSSPKC (473 aa)) the chain is Extracellular. Residues Asn225, Asn234, Asn283, and Asn341 are each glycosylated (N-linked (GlcNAc...) asparagine). The chain crosses the membrane as a helical span at residues 500–516 (LSASPAFLYTLVTLCLI). Residues 517–523 (TTMRTRS) lie on the Cytoplasmic side of the membrane.

Belongs to the TIKI family. Mn(2+) is required as a cofactor. It depends on Co(2+) as a cofactor.

The protein localises to the cell membrane. Functionally, metalloprotease that acts as a negative regulator of the Wnt signaling pathway by mediating the cleavage of the N-terminal residues of a subset of Wnt proteins. Following cleavage, Wnt proteins become oxidized and form large disulfide-bond oligomers, leading to their inactivation. Able to cleave wnt8. Required for head formation. In Xenopus tropicalis (Western clawed frog), this protein is Metalloprotease TIKI2 (trabd2b).